Here is a 468-residue protein sequence, read N- to C-terminus: 3-isopropylmalate dehydratase large subunit (468 aa).

Residues cysteine 347, cysteine 407, and cysteine 410 each coordinate [4Fe-4S] cluster.

Belongs to the aconitase/IPM isomerase family. LeuC type 1 subfamily. Heterodimer of LeuC and LeuD. [4Fe-4S] cluster is required as a cofactor.

The enzyme catalyses (2R,3S)-3-isopropylmalate = (2S)-2-isopropylmalate. The protein operates within amino-acid biosynthesis; L-leucine biosynthesis; L-leucine from 3-methyl-2-oxobutanoate: step 2/4. Functionally, catalyzes the isomerization between 2-isopropylmalate and 3-isopropylmalate, via the formation of 2-isopropylmaleate. This chain is 3-isopropylmalate dehydratase large subunit, found in Campylobacter jejuni (strain RM1221).